The sequence spans 411 residues: F-box protein At4g19940 (411 aa).

The region spanning 29–75 (RQPIPEIPFDLVIEILTRLPAKSLMRFKSVSKLWSSLICSRNFTNRL) is the F-box domain.

The protein is F-box protein At4g19940 of Arabidopsis thaliana (Mouse-ear cress).